The chain runs to 306 residues: Large ribosomal subunit protein mL45 (306 aa).

Belongs to the mitochondrion-specific ribosomal protein mL45 family. As to quaternary structure, component of the mitochondrial ribosome large subunit (39S) which comprises a 16S rRNA and about 50 distinct proteins.

The protein localises to the mitochondrion. Its function is as follows. Component of the mitochondrial large ribosomal subunit (mt-LSU). Within the mitochondrial ribosomes, required to direct the nascent polypeptide toward the tunnel exit and position the exit at a distance from the membrane surface. This Bos taurus (Bovine) protein is Large ribosomal subunit protein mL45 (MRPL45).